Reading from the N-terminus, the 98-residue chain is Plastocyanin (98 aa).

Residues 1-98 (AAIVKLGGDD…AGMKMTITVQ (98 aa)) enclose the Plastocyanin-like domain. Residues His38, Cys83, His86, and Met91 each contribute to the Cu cation site.

This sequence belongs to the plastocyanin family. Cu(2+) is required as a cofactor.

Its subcellular location is the plastid. It localises to the chloroplast thylakoid membrane. Its function is as follows. Participates in electron transfer between P700 and the cytochrome b6-f complex in photosystem I. The sequence is that of Plastocyanin (PETE) from Ulva prolifera (Green seaweed).